The sequence spans 287 residues: Casein kinase II subunit beta-1 (287 aa).

The interval Met1–Glu97 is disordered. Residues Glu13–Glu25 are compositionally biased toward basic and acidic residues. The segment covering Gly41–Ala50 has biased composition (low complexity). Residues Ser78 to Glu97 are compositionally biased toward acidic residues.

Belongs to the casein kinase 2 subunit beta family. Heterotetramer of two catalytic alpha subunits and two regulatory beta subunits. Interacts with CCA1. Interacts with LHY. Post-translationally, phosphorylated by alpha subunit.

The protein localises to the cytoplasm. It localises to the cytosol. It is found in the nucleus. Plays a complex role in regulating the basal catalytic activity of the alpha subunit. The tetrameric holoenzyme CK2, composed of two alpha and two beta subunits, phosphorylates the transcription factor GBFl, resulting in stimulation of its DNA binding activity. CK2 phosphorylates the transcription factor PIF1 after an exposure to light, resulting in a proteasome-dependent degradation of PIF1 and promotion of photomorphogenesis. CK2 phosphorylates translation initiation factors. May participate in the regulation of the initiation of translation. Stimulates the binding of CCA1 to promoters. The sequence is that of Casein kinase II subunit beta-1 (CKB1) from Arabidopsis thaliana (Mouse-ear cress).